A 156-amino-acid chain; its full sequence is 1-methylthio-D-xylulose 5-phosphate methylsulfurylase (156 aa).

One can recognise a Cupin type-2 domain in the interval 55–122 (YFEVGPGGHS…ADEALGFLCM (68 aa)). Positions 67, 69, 73, and 107 each coordinate Mn(2+). The active site involves Cys121.

The catalysed reaction is S-methyl-1-thio-D-xylulose 5-phosphate + glutathione = S-(methylsulfanyl)glutathione + 1-deoxy-D-xylulose 5-phosphate. It carries out the reaction S-(methylsulfanyl)glutathione + AH2 = methanethiol + glutathione + A. It participates in amino-acid biosynthesis; L-methionine biosynthesis via salvage pathway. It functions in the pathway metabolic intermediate biosynthesis; 1-deoxy-D-xylulose 5-phosphate biosynthesis. In terms of biological role, catalyzes the formation of S-(methylsulfanyl)glutathione and 1-deoxy-D-xylulose 5-phosphate (DXP) from 1-methylthioxylulose 5-phosphate (MTXu-5P). The S-(methylsulfanyl)glutathione is reductively cleaved to relase methanethiol in a second reaction. Involved in the MTA-isoprenoid shunt of the methionine salvage pathway. The polypeptide is 1-methylthio-D-xylulose 5-phosphate methylsulfurylase (Rhodospirillum rubrum (strain ATCC 11170 / ATH 1.1.1 / DSM 467 / LMG 4362 / NCIMB 8255 / S1)).